Consider the following 195-residue polypeptide: dCTP deaminase (195 aa).

DCTP contacts are provided by residues 110 to 115 (RSSLAR), Asp128, 136 to 138 (VLE), Tyr171, Lys178, and Gln182. Glu138 (proton donor/acceptor) is an active-site residue. The segment at 171–195 (YSSRKDAKYKNQQSAVASRIDEDKE) is disordered.

The protein belongs to the dCTP deaminase family. Homotrimer.

It carries out the reaction dCTP + H2O + H(+) = dUTP + NH4(+). It participates in pyrimidine metabolism; dUMP biosynthesis; dUMP from dCTP (dUTP route): step 1/2. Catalyzes the deamination of dCTP to dUTP. The chain is dCTP deaminase from Haemophilus influenzae (strain ATCC 51907 / DSM 11121 / KW20 / Rd).